The following is a 207-amino-acid chain: Fibroblast growth factor 18 (207 aa).

The N-terminal stretch at 1–27 (MYSAPSACTCLCLHFLLLCFQVQVLVA) is a signal peptide. N39 carries an N-linked (GlcNAc...) asparagine glycan. A disulfide bridge links C109 with C127. The N-linked (GlcNAc...) asparagine glycan is linked to N137. The disordered stretch occupies residues 157–186 (GRPRKGPKTRENQQDVHFMKRYPKGQPELQ). Residues 164-174 (KTRENQQDVHF) are compositionally biased toward basic and acidic residues.

The protein belongs to the heparin-binding growth factors family. In terms of assembly, interacts with FGFR3 and FGFR4.

Its subcellular location is the secreted. Its function is as follows. Plays an important role in the regulation of cell proliferation, cell differentiation and cell migration. Required for normal ossification and bone development. Stimulates hepatic and intestinal proliferation. In Homo sapiens (Human), this protein is Fibroblast growth factor 18 (FGF18).